Reading from the N-terminus, the 305-residue chain is Ornithine carbamoyltransferase (305 aa).

Carbamoyl phosphate-binding positions include 50-53, Gln-77, Arg-101, and 128-131; these read STRT and HPCQ. Residues Asn-159, Asp-222, and 226–227 contribute to the L-ornithine site; that span reads SM. Carbamoyl phosphate is bound by residues 262–263 and Arg-290; that span reads CL.

This sequence belongs to the aspartate/ornithine carbamoyltransferase superfamily. OTCase family.

The protein resides in the cytoplasm. It carries out the reaction carbamoyl phosphate + L-ornithine = L-citrulline + phosphate + H(+). The protein operates within amino-acid biosynthesis; L-arginine biosynthesis; L-arginine from L-ornithine and carbamoyl phosphate: step 1/3. Functionally, reversibly catalyzes the transfer of the carbamoyl group from carbamoyl phosphate (CP) to the N(epsilon) atom of ornithine (ORN) to produce L-citrulline. This chain is Ornithine carbamoyltransferase, found in Synechococcus elongatus (strain ATCC 33912 / PCC 7942 / FACHB-805) (Anacystis nidulans R2).